We begin with the raw amino-acid sequence, 216 residues long: Thiamine-phosphate synthase (216 aa).

4-amino-2-methyl-5-(diphosphooxymethyl)pyrimidine-binding positions include 37-41 (QVRSK) and Asp68. Residues Asp69 and Asp93 each coordinate Mg(2+). A 4-amino-2-methyl-5-(diphosphooxymethyl)pyrimidine-binding site is contributed by Thr112. 140–142 (TPT) contacts 2-[(2R,5Z)-2-carboxy-4-methylthiazol-5(2H)-ylidene]ethyl phosphate. Lys143 lines the 4-amino-2-methyl-5-(diphosphooxymethyl)pyrimidine pocket.

The protein belongs to the thiamine-phosphate synthase family. It depends on Mg(2+) as a cofactor.

It carries out the reaction 2-[(2R,5Z)-2-carboxy-4-methylthiazol-5(2H)-ylidene]ethyl phosphate + 4-amino-2-methyl-5-(diphosphooxymethyl)pyrimidine + 2 H(+) = thiamine phosphate + CO2 + diphosphate. The catalysed reaction is 2-(2-carboxy-4-methylthiazol-5-yl)ethyl phosphate + 4-amino-2-methyl-5-(diphosphooxymethyl)pyrimidine + 2 H(+) = thiamine phosphate + CO2 + diphosphate. It catalyses the reaction 4-methyl-5-(2-phosphooxyethyl)-thiazole + 4-amino-2-methyl-5-(diphosphooxymethyl)pyrimidine + H(+) = thiamine phosphate + diphosphate. It participates in cofactor biosynthesis; thiamine diphosphate biosynthesis; thiamine phosphate from 4-amino-2-methyl-5-diphosphomethylpyrimidine and 4-methyl-5-(2-phosphoethyl)-thiazole: step 1/1. Its function is as follows. Condenses 4-methyl-5-(beta-hydroxyethyl)thiazole monophosphate (THZ-P) and 2-methyl-4-amino-5-hydroxymethyl pyrimidine pyrophosphate (HMP-PP) to form thiamine monophosphate (TMP). This Corynebacterium efficiens (strain DSM 44549 / YS-314 / AJ 12310 / JCM 11189 / NBRC 100395) protein is Thiamine-phosphate synthase.